Here is a 288-residue protein sequence, read N- to C-terminus: Energy-coupling factor transporter ATP-binding protein EcfA2 (288 aa).

The ABC transporter domain maps to 3-246 (IKLEQLGYCY…PDELVDLGLS (244 aa)). 40–47 (GHTGSGKS) serves as a coordination point for ATP.

The protein belongs to the ABC transporter superfamily. Energy-coupling factor EcfA family. As to quaternary structure, forms a stable energy-coupling factor (ECF) transporter complex composed of 2 membrane-embedded substrate-binding proteins (S component), 2 ATP-binding proteins (A component) and 2 transmembrane proteins (T component).

Its subcellular location is the cell membrane. In terms of biological role, ATP-binding (A) component of a common energy-coupling factor (ECF) ABC-transporter complex. Unlike classic ABC transporters this ECF transporter provides the energy necessary to transport a number of different substrates. The sequence is that of Energy-coupling factor transporter ATP-binding protein EcfA2 from Listeria innocua serovar 6a (strain ATCC BAA-680 / CLIP 11262).